We begin with the raw amino-acid sequence, 111 residues long: Nucleoid-associated protein PputW619_3586 (111 aa).

The segment at 87–111 (EQSSQEKMGGMTAGMQLPPGFKMPF) is disordered.

The protein belongs to the YbaB/EbfC family. Homodimer.

It is found in the cytoplasm. The protein localises to the nucleoid. In terms of biological role, binds to DNA and alters its conformation. May be involved in regulation of gene expression, nucleoid organization and DNA protection. The protein is Nucleoid-associated protein PputW619_3586 of Pseudomonas putida (strain W619).